Consider the following 36-residue polypeptide: U4-ctenitoxin-Pr1a (36 aa).

Cystine bridges form between cysteine 3-cysteine 17, cysteine 10-cysteine 22, and cysteine 16-cysteine 34.

As to expression, expressed by the venom gland.

The protein resides in the secreted. In terms of biological role, neurotoxin. Causes spastic paralysis and death in mice. Moderate inhibitor of L-type calcium channels (Cav1/CACNA1). The sequence is that of U4-ctenitoxin-Pr1a from Phoneutria reidyi (Brazilian Amazonian armed spider).